A 619-amino-acid polypeptide reads, in one-letter code: Keratin, type II cytoskeletal 1 (619 aa).

Residues 1 to 180 form a head region; it reads MSRHFSSRSG…DPEIQKVKTR (180 aa). An Omega-N-methylarginine modification is found at R12. Phosphoserine occurs at positions 18 and 21. Residues 28 to 49 are disordered; it reads QRRTTSSSVRHSGGGGGRFSGG. The span at 39 to 49 shows a compositional bias: gly residues; it reads SGGGGGRFSGG. R45 carries the omega-N-methylarginine modification. S68 is subject to Phosphoserine. Residues 173–477 are a coiled coil; sequence EIQKVKTRER…ELMNTKLALD (305 aa). Positions 181 to 216 are coil 1A; that stretch reads EREQIKSLNNQFASFIDKVRFLEQQNQVLQTKWELL. The 314-residue stretch at 181-494 folds into the IF rod domain; that stretch reads EREQIKSLNN…TLLEGEESRM (314 aa). Residues 217–235 form a linker 1 region; the sequence is QQVDTSTRTHSLEPYFENY. The coil 1B stretch occupies residues 236-327; the sequence is ISNLRRRVDQ…TLYQAELSQM (92 aa). An N6,N6-dimethyllysine modification is found at K277. A linker 12 region spans residues 328 to 351; sequence QTQISETNVILSMDNNRSLDLDSI. S345 carries the phosphoserine modification. A coil 2 region spans residues 352–490; it reads ISEVKAQYEE…ATYRTLLEGE (139 aa). Residues 491–619 form a tail region; that stretch reads ESRMSGECAP…VSTSYSRAVR (129 aa). R519 and R575 each carry omega-N-methylarginine. The interval 559–619 is disordered; it reads GGGGGGYGSS…VSTSYSRAVR (61 aa). Residues 573-595 show a composition bias toward gly residues; sequence GHRGGSGGGSRSGGSSGGRGSSS. Residues 596-606 show a composition bias toward low complexity; sequence GGIKTSSGSSS. Over residues 607–619 the composition is skewed to polar residues; that stretch reads VKFVSTSYSRAVR.

The protein belongs to the intermediate filament family. As to quaternary structure, heterotetramer of two type I and two type II keratins. Heterodimer with KRT10. Two heterodimers of KRT1 and KRT10 form a heterotetramer. Forms a heterodimer with KRT14; the interaction is more abundant in the absence of KRT5. Interacts with ITGB1 in the presence of RACK1 and SRC, and with RACK1. Interacts with C1QBP; the association represents a cell surface kininogen receptor. Interacts with EPPK1; interaction is dependent of higher-order structure of intermediate filament. In terms of processing, undergoes deimination of some arginine residues (citrullination).

Its subcellular location is the cell membrane. The protein localises to the cytoplasm. Its function is as follows. May regulate the activity of kinases such as PKC and SRC via binding to integrin beta-1 (ITB1) and the receptor of activated protein C kinase 1 (RACK1). In complex with C1QBP is a high affinity receptor for kininogen-1/HMWK. The chain is Keratin, type II cytoskeletal 1 from Canis lupus familiaris (Dog).